Here is a 1325-residue protein sequence, read N- to C-terminus: MLGWVQRVLPQPPGTPQKTVETAGPQPETESKPEANPQPEPEPQQEPEPEPEPEPEPEPEPEPEPEPEPEPEPEPVPEEAPPEVQALPPEEPMEGEGEAEAGPSLQETQVADPAQPTSQAQVAVAKVNRPSSWMLSWFWRGMQKVVPQPVCSNGGQNLAAGERDPDQGGAQIPEPCGTGDPGSAEASGTQDTEPSLWLLRWLEQNLEKVLPQPPPPSLAWKVEPEAAVLDPDPPGTPMQMEPTESPSQPNPGPLEPEEEPAAEPQPGFQSSSLPPPGDPVRLIEWLLHRLEMALPQPVLHGKAAEQEPGCPGMCDVQTISILPVEQVEHDLVLEEVDSCWEDAQQEDGASPQETEVAPAHEEESEAIVEIPRELTKIQEEREDEQEEDEEEKEEEKKKGEEEKEKEEEEKEKEKEKEEEKEEEEKEEEEEEEKEEEEEEKEEEEKEEEEKEEEEEEEEEEEEPIVLLDSCLVVQADVDECQLERTPSELASIQELPEEKEEKEEEKEEEKEEEEEKKEEEVEKKEEGEATNSTVPATKEHPELQVEDTDADSGPLIPEETLPPPERPPPSPVKSDTLTVPGAAAAGHRKKLPSQDDEAEELKALSPAESPVVAWSDPTTPQEADGQDRAASTASQNSAIINDRLQELVKMFKERTEKVKEKLIDPDVTSDEESPKPSPAKKAPEPDPAQKPAEAEVAEEEHYCDMLCCKFKRRPLKMYRFPQSIDPLTNLMYILWLFFVVLAWNWNCWLIPVRWAFPYQRADNIHFWLLMDYLCDFIYLLDITVFQMRLQFVKGGDIITDKKEMRNNYLKSRRFKMDLLCLLPLDFLYLKLGINPLLRLPRCLKYMAFFEFNNRLEAILSKAYVYRVIRTTAYLLYSLHLNSCLYYWASAFQGIGSTHWVYDGVGNSYIRCYYWAVKTLITIGGLPDPQTLFEIVFQLLNYFTGVFAFSVMIGQMRDVVGAATAGQTYYRSCMDSTVKYMNFYKIPRSVQNRVKTWYEYTWHSQGMLDESELMVQLPDKMRLDLAIDVNYSIVSKVALFQGCDRQMIFDMLKRLRSVVYLPNDYVCKKGEIGREMYIIQAGQVQVLGGPDGKAVLVTLKAGSVFGEISLLAVGGGNRRTANVVAHGFTNLFILDKKDLNEILVHYPESQKLLRKKARRMLRNNNKPKEEKSVLILPPRAGTPKLFNAALAAAGKMGPRGAKGGKLAHLRARLKELAALEAAARQQQLLEQAKSSQEAGGEEGSGATDQPAPQEPPEPKDPPKPPGPPEPSAQSSPPPASAKPEESTGEAAGPPEPSVRIRVSPGPDPGEQTLSVEVLEEKKEGAE.

Disordered regions lie at residues 1–124, 147–198, 227–279, 340–470, 482–637, and 659–694; these read MLGW…QVAV, PQPV…SLWL, AVLD…PGDP, WEDA…LDSC, LERT…SQNS, and KEKL…PAEA. Residues 1–732 lie on the Cytoplasmic side of the membrane; that stretch reads MLGWVQRVLP…SIDPLTNLMY (732 aa). The segment covering 43–81 has biased composition (acidic residues); sequence PQQEPEPEPEPEPEPEPEPEPEPEPEPEPEPEPVPEEAP. Polar residues predominate over residues 105 to 121; the sequence is LQETQVADPAQPTSQAQ. Positions 370–379 are enriched in basic and acidic residues; that stretch reads IPRELTKIQE. Composition is skewed to acidic residues over residues 380 to 393, 418 to 463, and 495 to 517; these read ERED…EEKE, EEKE…EEEP, and LPEE…EEKK. The segment covering 518 to 527 has biased composition (basic and acidic residues); it reads EEEVEKKEEG. The segment covering 560–571 has biased composition (pro residues); it reads TLPPPERPPPSP. The calmodulin-binding CaM1 stretch occupies residues 633 to 643; it reads ASQNSAIINDR. Residues 733 to 754 traverse the membrane as a helical segment; sequence ILWLFFVVLAWNWNCWLIPVRW. Residues 755–763 are Extracellular-facing; the sequence is AFPYQRADN. Residues 764–785 traverse the membrane as a helical segment; it reads IHFWLLMDYLCDFIYLLDITVF. Topologically, residues 786 to 800 are cytoplasmic; that stretch reads QMRLQFVKGGDIITD. Residues 801–820 traverse the membrane as a helical segment; that stretch reads KKEMRNNYLKSRRFKMDLLC. At 821–836 the chain is on the extracellular side; sequence LLPLDFLYLKLGINPL. The helical transmembrane segment at 837 to 849 threads the bilayer; it reads LRLPRCLKYMAFF. The Cytoplasmic portion of the chain corresponds to 850–861; it reads EFNNRLEAILSK. A helical transmembrane segment spans residues 862 to 884; that stretch reads AYVYRVIRTTAYLLYSLHLNSCL. The tract at residues 862-961 is ion conduction pathway; it reads AYVYRVIRTT…IGQMRDVVGA (100 aa). Topologically, residues 885 to 907 are extracellular; it reads YYWASAFQGIGSTHWVYDGVGNS. The next 2 helical transmembrane spans lie at 908–934 and 935–960; these read YIRC…LFEI and VFQL…DVVG. Residues 961–1325 are Cytoplasmic-facing; it reads AATAGQTYYR…VLEEKKEGAE (365 aa). A C-linker region spans residues 964–1040; the sequence is AGQTYYRSCM…SIVSKVALFQ (77 aa). The interval 1038–1142 is cNMP-binding domain; sequence LFQGCDRQMI…LDKKDLNEIL (105 aa). The segment at 1044-1160 is cyclic nucleotide-binding domain; that stretch reads RQMIFDMLKR…LLRKKARRML (117 aa). Positions 1105, 1106, 1108, 1118, and 1119 each coordinate 3',5'-cyclic GMP. R1118 contributes to the 3',5'-cyclic AMP binding site. The segment at 1224–1230 is calmodulin-binding CaM2; that stretch reads QQQLLEQ. The span at 1226–1250 shows a compositional bias: low complexity; the sequence is QLLEQAKSSQEAGGEEGSGATDQPA. Residues 1226-1325 are disordered; the sequence is QLLEQAKSSQ…VLEEKKEGAE (100 aa). The span at 1262–1279 shows a compositional bias: pro residues; the sequence is KPPGPPEPSAQSSPPPAS.

It belongs to the cyclic nucleotide-gated cation channel (TC 1.A.1.5) family. CNGB1 subfamily. In terms of tissue distribution, rod outer segments. Olfactory sensory neurons.

It is found in the cell projection. It localises to the cilium membrane. It carries out the reaction Ca(2+)(in) = Ca(2+)(out). The catalysed reaction is Na(+)(in) = Na(+)(out). It catalyses the reaction K(+)(in) = K(+)(out). The enzyme catalyses NH4(+)(in) = NH4(+)(out). It carries out the reaction Rb(+)(in) = Rb(+)(out). The catalysed reaction is Li(+)(in) = Li(+)(out). It catalyses the reaction Cs(+)(in) = Cs(+)(out). In terms of biological role, pore-forming subunit of the rod cyclic nucleotide-gated channel. Mediates rod photoresponses at dim light converting transient changes in intracellular cGMP levels into electrical signals. In the dark, cGMP levels are high and keep the channel open enabling a steady inward current carried by Na(+) and Ca(2+) ions that leads to membrane depolarization and neurotransmitter release from synaptic terminals. Upon photon absorption cGMP levels decline leading to channel closure and membrane hyperpolarization that ultimately slows neurotransmitter release and signals the presence of light, the end point of the phototransduction cascade. Pore-forming subunit of the olfactory cyclic nucleotide-gated channel. Operates in the cilia of olfactory sensory neurons where chemical stimulation of the odorant is converted to an electrical signal. Mediates odorant-induced cAMP-dependent Ca(2+) influx triggering neuron depolarization. The rise of intracellular Ca(2+) levels potentiates the olfactory response by activating Ca(2+)-dependent Cl(-) channels, but it also serves as a negative feedback signal to desensitize the channel for rapid adaptation to odorants. Conducts cGMP- and cAMP-gated ion currents, with permeability for monovalent and divalent cations. The selectivity for Ca(2+) over Na(+) increases with cGMP concentrations, whereas the selectivity among monovalent ions is independent of the cGMP levels. This is Cyclic nucleotide-gated channel beta-1 from Mus musculus (Mouse).